We begin with the raw amino-acid sequence, 700 residues long: Polyribonucleotide nucleotidyltransferase (700 aa).

Residues Asp491 and Asp497 each contribute to the Mg(2+) site. The KH domain occupies 558–617; it reads PNYAVIEINPDKIRDVIGKGGATIRQLTEETGAVIDIDDAGTIRIFGENKAATKAAIAKI. An S1 motif domain is found at 627–695; sequence GKTYEGTVAR…NRGRIKLTMK (69 aa).

Belongs to the polyribonucleotide nucleotidyltransferase family. In terms of assembly, component of the RNA degradosome, which is a multiprotein complex involved in RNA processing and mRNA degradation. Mg(2+) serves as cofactor.

It is found in the cytoplasm. It catalyses the reaction RNA(n+1) + phosphate = RNA(n) + a ribonucleoside 5'-diphosphate. Functionally, involved in mRNA degradation. Catalyzes the phosphorolysis of single-stranded polyribonucleotides processively in the 3'- to 5'-direction. The sequence is that of Polyribonucleotide nucleotidyltransferase from Psychrobacter arcticus (strain DSM 17307 / VKM B-2377 / 273-4).